The chain runs to 281 residues: 2-dehydro-3-deoxyphosphooctonate aldolase (281 aa).

The protein belongs to the KdsA family.

It localises to the cytoplasm. It catalyses the reaction D-arabinose 5-phosphate + phosphoenolpyruvate + H2O = 3-deoxy-alpha-D-manno-2-octulosonate-8-phosphate + phosphate. Its pathway is carbohydrate biosynthesis; 3-deoxy-D-manno-octulosonate biosynthesis; 3-deoxy-D-manno-octulosonate from D-ribulose 5-phosphate: step 2/3. The protein operates within bacterial outer membrane biogenesis; lipopolysaccharide biosynthesis. The protein is 2-dehydro-3-deoxyphosphooctonate aldolase of Acidithiobacillus ferrooxidans (strain ATCC 23270 / DSM 14882 / CIP 104768 / NCIMB 8455) (Ferrobacillus ferrooxidans (strain ATCC 23270)).